The following is a 196-amino-acid chain: Holliday junction branch migration complex subunit RuvA (196 aa).

Positions 1 to 63 (MYEYFKGIIS…EDAELLYGFA (63 aa)) are domain I. The tract at residues 64 to 142 (TEEEKQLFLS…AADGLAESKA (79 aa)) is domain II. Positions 143–146 (PVQT) are flexible linker. Residues 147 to 196 (VDNQELEEAMEAMLALGYKATELKKIKKFFEGTTDTAENYIKSALKMLVK) are domain III.

The protein belongs to the RuvA family. In terms of assembly, homotetramer. Forms an RuvA(8)-RuvB(12)-Holliday junction (HJ) complex. HJ DNA is sandwiched between 2 RuvA tetramers; dsDNA enters through RuvA and exits via RuvB. An RuvB hexamer assembles on each DNA strand where it exits the tetramer. Each RuvB hexamer is contacted by two RuvA subunits (via domain III) on 2 adjacent RuvB subunits; this complex drives branch migration. In the full resolvosome a probable DNA-RuvA(4)-RuvB(12)-RuvC(2) complex forms which resolves the HJ.

Its subcellular location is the cytoplasm. The RuvA-RuvB-RuvC complex processes Holliday junction (HJ) DNA during genetic recombination and DNA repair, while the RuvA-RuvB complex plays an important role in the rescue of blocked DNA replication forks via replication fork reversal (RFR). RuvA specifically binds to HJ cruciform DNA, conferring on it an open structure. The RuvB hexamer acts as an ATP-dependent pump, pulling dsDNA into and through the RuvAB complex. HJ branch migration allows RuvC to scan DNA until it finds its consensus sequence, where it cleaves and resolves the cruciform DNA. The chain is Holliday junction branch migration complex subunit RuvA from Streptococcus gordonii (strain Challis / ATCC 35105 / BCRC 15272 / CH1 / DL1 / V288).